A 275-amino-acid chain; its full sequence is MASYPNGQSCPGAAGQVPGVPPGGYYPGPPHGGGQYGSGLPPGGGYGAPAPGGPYGYPSAGGVPSGTPSGPYGGIPPGGPYGQLPPGGPYGTQPGHYGQGGVPPNVDPEAYSWFQSVDADHSGYISLKELKQALVNSNWSSFNDETCLMMINMFDKTKSGRIDVAGFSALWKFLQQWRNLFQQYDRDRSGSISSTELQQALSQMGYNLSPQFTQLLVSRYCARSAIPAMQLDCFIKVCTQLQVLTEAFREKDTAVQGNIRLSFEDFVTMTASRML.

8 consecutive repeat copies span residues 21 to 29 (PPGGYYPGP), 31 to 39 (HGGGQYGSG), 41 to 49 (PPGGGYGAP), 50 to 59 (APGGPYGYPS), 60 to 68 (AGGVPSGTP), 76 to 84 (PPGGPYGQL), 85 to 91 (PPGGPYG), and 92 to 100 (TQPGHYGQG). Disordered stretches follow at residues 21-45 (PPGG…PGGG) and 59-103 (SAGG…GGVP). The tract at residues 21 to 100 (PPGGYYPGPP…GTQPGHYGQG (80 aa)) is 8 X 9 AA approximate tandem repeat of [AP]-P-G-G-P-Y-G-G-P-P. Gly residues predominate over residues 31-45 (HGGGQYGSGLPPGGG). The span at 59 to 70 (SAGGVPSGTPSG) shows a compositional bias: low complexity. EF-hand domains follow at residues 105 to 140 (NVDP…SNWS), 146 to 174 (TCLM…WKFL), 172 to 207 (KFLQ…MGYN), 208 to 244 (LSPQ…LQVL), and 245 to 274 (TEAF…ASRM). 5 residues coordinate Ca(2+): Asp-118, Asp-120, Ser-122, Tyr-124, and Glu-129. Ca(2+) contacts are provided by Asp-185, Asp-187, Ser-189, Ser-191, and Glu-196. A required for interaction with PDCD6 region spans residues 195–275 (TELQQALSQM…FVTMTASRML (81 aa)).

In terms of assembly, heterodimer; heterodimerizes (via the EF-hand 5) with PDCD6. Dissociates from PDCD6 in presence of calcium. In terms of processing, ubiquitinated by the BCR(KLHL12) E3 ubiquitin ligase complex.

The protein localises to the cytoplasm. The protein resides in the endoplasmic reticulum. Its subcellular location is the membrane. It localises to the cytoplasmic vesicle. It is found in the COPII-coated vesicle membrane. Calcium-binding protein that acts as an adapter that bridges unrelated proteins or stabilizes weak protein-protein complexes in response to calcium. Together with PDCD6, acts as a calcium-dependent adapter for the BCR(KLHL12) complex, a complex involved in endoplasmic reticulum (ER)-Golgi transport by regulating the size of COPII coats. In response to cytosolic calcium increase, the heterodimer formed with PDCD6 interacts with, and bridges together the BCR(KLHL12) complex and SEC31 (SEC31A or SEC31B), promoting monoubiquitination of SEC31 and subsequent collagen export, which is required for neural crest specification. Its role in the heterodimer formed with PDCD6 is however unclear: some evidence shows that PEF1 and PDCD6 work together and promote association between PDCD6 and SEC31 in presence of calcium. Other reports show that PEF1 dissociates from PDCD6 in presence of calcium, and may act as a negative regulator of PDCD6. Also acts as a negative regulator of ER-Golgi transport; possibly by inhibiting interaction between PDCD6 and SEC31. This is Peflin from Mus musculus (Mouse).